We begin with the raw amino-acid sequence, 610 residues long: Phosphoenolpyruvate carboxykinase [GTP] (610 aa).

Substrate contacts are provided by residues Arg82 and 221–223; that span reads YGG. Mn(2+) is bound by residues Lys230 and His250. Ser272 serves as a coordination point for substrate. 273–278 lines the GTP pocket; it reads ACGKTN. Cys274 is a catalytic residue. Residue Asp297 participates in Mn(2+) binding. 387-389 contributes to the substrate binding site; sequence NSR. GTP-binding positions include Arg389, Arg420, and 515–518; that span reads FGDN.

The protein belongs to the phosphoenolpyruvate carboxykinase [GTP] family. Monomer. The cofactor is Mn(2+).

It localises to the cytoplasm. It catalyses the reaction oxaloacetate + GTP = phosphoenolpyruvate + GDP + CO2. Its pathway is carbohydrate biosynthesis; gluconeogenesis. Its function is as follows. Involved in the gluconeogenesis. Catalyzes the conversion of oxaloacetate (OAA) to phosphoenolpyruvate (PEP), the rate-limiting step in the metabolic pathway that produces glucose from lactate and other precursors derived from the citric acid cycle. This is Phosphoenolpyruvate carboxykinase [GTP] from Corynebacterium glutamicum (strain ATCC 13032 / DSM 20300 / JCM 1318 / BCRC 11384 / CCUG 27702 / LMG 3730 / NBRC 12168 / NCIMB 10025 / NRRL B-2784 / 534).